Consider the following 902-residue polypeptide: Glutamate receptor 4 (902 aa).

An N-terminal signal peptide occupies residues 1–20; it reads MRIICRQIVLLFSGFWGLAM. Residues 22–544 lie on the Extracellular side of the membrane; that stretch reads AFPSSVQIGG…GVFSFLDPLA (523 aa). N-linked (GlcNAc...) asparagine glycans are attached at residues Asn52, Asn56, Asn258, Asn371, Asn407, and Asn414. Cys84 and Cys331 are joined by a disulfide. L-glutamate is bound by residues Pro500, Thr502, and Arg507. The helical transmembrane segment at 545-565 threads the bilayer; the sequence is YEIWMCIVFAYIGVSVVLFLV. At 566–592 the chain is on the cytoplasmic side; sequence SRFSPYEWHTEEPEDGKEGPSDQPPNE. Residues 593–608 constitute an intramembrane region (helical; Pore-forming); it reads FGIFNSLWFSLGAFMQ. An intramembrane segment occupies 609–611; that stretch reads QGC. The S-palmitoyl cysteine moiety is linked to residue Cys611. At 612-617 the chain is on the cytoplasmic side; it reads DISPRS. A helical transmembrane segment spans residues 618-638; sequence LSGRIVGGVWWFFTLIIISSY. The Extracellular segment spans residues 639–813; that stretch reads TANLAAFLTV…DKTSALSLSN (175 aa). Residues Ser676, Thr677, and Glu727 each contribute to the L-glutamate site. A disulfide bridge links Cys740 with Cys795. Residues 814-834 traverse the membrane as a helical segment; the sequence is VAGVFYILVGGLGLAMLVALI. The Cytoplasmic segment spans residues 835 to 902; it reads EFCYKSRAEA…GLAVIASDLP (68 aa). The S-palmitoyl cysteine moiety is linked to residue Cys837. At Ser862 the chain carries Phosphoserine.

The protein belongs to the glutamate-gated ion channel (TC 1.A.10.1) family. GRIA4 subfamily. Homotetramer or heterotetramer of pore-forming glutamate receptor subunits. Tetramers may be formed by the dimerization of dimers. Interacts with EPB41L1 via its C-terminus. Isoform 3 interacts with PICK1. Found in a complex with GRIA1, GRIA2, GRIA3, CNIH2, CNIH3, CACNG2, CACNG3, CACNG4, CACNG5, CACNG7 and CACNG8. Interacts with CACNG5 and PRKCG. Found in a complex with GRIA1, GRIA2, GRIA3, DLG4, CACNG8 and CNIH2. In terms of processing, palmitoylated. Depalmitoylated upon L-glutamate stimulation. ZDHHC3/GODZ specifically palmitoylates Cys-611, which leads to Golgi retention and decreased cell surface expression. In contrast, Cys-837 palmitoylation does not affect cell surface expression but regulates stimulation-dependent endocytosis. Phosphorylated at Ser-862 by PRKCG; phosphorylation increases plasma membrane-associated GRI4 expression.

The protein localises to the cell membrane. Its subcellular location is the postsynaptic cell membrane. It is found in the cell projection. It localises to the dendrite. It catalyses the reaction Ca(2+)(in) = Ca(2+)(out). The enzyme catalyses Na(+)(in) = Na(+)(out). It carries out the reaction Mg(2+)(in) = Mg(2+)(out). Functionally, ionotropic glutamate receptor that functions as a ligand-gated cation channel, gated by L-glutamate and glutamatergic agonists such as alpha-amino-3-hydroxy-5-methyl-4-isoxazolepropionic acid (AMPA), quisqualic acid, and kainic acid. L-glutamate acts as an excitatory neurotransmitter at many synapses in the central nervous system and plays an important role in fast excitatory synaptic transmission. Binding of the excitatory neurotransmitter L-glutamate induces a conformation change, leading to the opening of the cation channel, and thereby converts the chemical signal to an electrical impulse upon entry of monovalent and divalent cations such as sodium and calcium. The receptor then desensitizes rapidly and enters a transient inactive state, characterized by the presence of bound agonist. In the presence of CACNG8, shows resensitization which is characterized by a delayed accumulation of current flux upon continued application of L-glutamate. This chain is Glutamate receptor 4, found in Mus musculus (Mouse).